A 338-amino-acid polypeptide reads, in one-letter code: MIKRKKLYFMKITIIGSGAWGSTLAQVLTDNNNQVLLYDTNLSYVEKINQGKHPIFNTPLLNVKAVSCLKQTLEYSDLIVLAVPMKFMRHLLKKITLMLTNPKSFVNVSKGIEPLTFLRVSEIVKQVIPAPLLANFASLMGPSHAEEVILRKLTLLTAASSNPVFSLEIQKLFSCPNYLKVYTSSDLVGNEICSAFKNILALINGILVAKDFGINSQAALMSRGILEMSRLVTFYQGNPQTVLGLPGLGDLIVTAFSKYSRNFNAGAKIAAGIPYQQIIDSSLQTVEGFQTLNAFYQLQLKHNLDLPIIQASYQLIFESKPFDTVFATLIQRPYKSEF.

NADPH-binding residues include W20 and K110. Residues K110, G141, and S143 each contribute to the sn-glycerol 3-phosphate site. A145 provides a ligand contact to NADPH. Positions 197, 250, 260, 261, and 262 each coordinate sn-glycerol 3-phosphate. K197 (proton acceptor) is an active-site residue. R261 lines the NADPH pocket. Residue E287 participates in NADPH binding.

Belongs to the NAD-dependent glycerol-3-phosphate dehydrogenase family.

It localises to the cytoplasm. The catalysed reaction is sn-glycerol 3-phosphate + NAD(+) = dihydroxyacetone phosphate + NADH + H(+). The enzyme catalyses sn-glycerol 3-phosphate + NADP(+) = dihydroxyacetone phosphate + NADPH + H(+). It functions in the pathway membrane lipid metabolism; glycerophospholipid metabolism. Catalyzes the reduction of the glycolytic intermediate dihydroxyacetone phosphate (DHAP) to sn-glycerol 3-phosphate (G3P), the key precursor for phospholipid synthesis. The sequence is that of Glycerol-3-phosphate dehydrogenase [NAD(P)+] from Aster yellows witches'-broom phytoplasma (strain AYWB).